A 266-amino-acid polypeptide reads, in one-letter code: MLQYAFMRNAFVASFLIALLCPLVGMHLVLRRYALMGDALAHGSLAGVSIAVSCGIHPGWGSFFFTALVGVLIEFLRAFFKNHHDLILSIVLSLSVGIAVTLLSSGLIQADIDSYLFGSILVVSTRDLWIMLALSVFCVGTLALRYHQLLYLAFDEETARICGVAADGINYVASVVISATIAASIKITGILVLSSLMTVPVATALQLRVGFLLTLVAAFLFSMLDTALGLVFSYYLNVAPGGFTALVSVVVLMLVIALTQVGRART.

Transmembrane regions (helical) follow at residues 10 to 30 (AFVA…HLVL), 34 to 54 (ALMG…AVSC), 56 to 76 (IHPG…IEFL), 88 to 108 (LSIV…SGLI), 120 to 140 (ILVV…FCVG), 172 to 192 (VASV…GILV), 211 to 231 (FLLT…LGLV), and 238 to 258 (VAPG…VIAL).

It belongs to the ABC-3 integral membrane protein family.

Its subcellular location is the cell inner membrane. Its function is as follows. Part of an ATP-driven transport system TP_0034/TP_0035/TP_0036 for a metal. This Treponema pallidum (strain Nichols) protein is Probable metal transport system membrane protein TP_0036.